The chain runs to 339 residues: D-erythrose-4-phosphate dehydrogenase (339 aa).

11–12 (RI) serves as a coordination point for NAD(+). Residues 158-160 (SCT), Arg204, 217-218 (TK), and Arg240 contribute to the substrate site. Catalysis depends on Cys159, which acts as the Nucleophile. Asn322 is a binding site for NAD(+).

This sequence belongs to the glyceraldehyde-3-phosphate dehydrogenase family. Epd subfamily. In terms of assembly, homotetramer.

The protein localises to the cytoplasm. The enzyme catalyses D-erythrose 4-phosphate + NAD(+) + H2O = 4-phospho-D-erythronate + NADH + 2 H(+). The protein operates within cofactor biosynthesis; pyridoxine 5'-phosphate biosynthesis; pyridoxine 5'-phosphate from D-erythrose 4-phosphate: step 1/5. Its function is as follows. Catalyzes the NAD-dependent conversion of D-erythrose 4-phosphate to 4-phosphoerythronate. The sequence is that of D-erythrose-4-phosphate dehydrogenase from Aliivibrio fischeri (strain MJ11) (Vibrio fischeri).